The following is a 526-amino-acid chain: Medium/long-chain-fatty-acid--[acyl-carrier-protein] ligase MbtM (526 aa).

2 positions are modified to N6-acetyllysine; by Pat: Lys260 and Lys511.

It belongs to the ATP-dependent AMP-binding enzyme family. Post-translationally, acetylated on Lys-511 and Lys-260 by Pat. Lys-511 is the major acetylation site. Acetylation results in the inactivation of the enzyme.

The catalysed reaction is a long-chain fatty acid + holo-[ACP] + ATP = a long-chain fatty acyl-[ACP] + AMP + diphosphate. It catalyses the reaction a medium-chain fatty acid + holo-[ACP] + ATP = a medium-chain fatty acyl-[ACP] + AMP + diphosphate. It carries out the reaction hexadecanoate + holo-[ACP] + ATP = hexadecanoyl-[ACP] + AMP + diphosphate. The enzyme catalyses hexadecanoate + ATP + H(+) = hexadecanoyl-AMP + diphosphate. The catalysed reaction is hexadecanoyl-AMP + holo-[ACP] = hexadecanoyl-[ACP] + AMP + H(+). It catalyses the reaction dodecanoate + holo-[ACP] + ATP = dodecanoyl-[ACP] + AMP + diphosphate. It carries out the reaction dodecanoate + ATP + H(+) = dodecanoyl-AMP + diphosphate. The enzyme catalyses dodecanoyl-AMP + holo-[ACP] = dodecanoyl-[ACP] + AMP + H(+). Its pathway is siderophore biosynthesis; mycobactin biosynthesis. Reversibly inactivated by post-translational acetylation by Pat in a cAMP-dependent manner and reactivated by Sir2 deacylase. Activates lipidic moieties required for mycobactin biosynthesis. Converts medium- to long-chain aliphatic fatty acids into acyl adenylate, which is further transferred on to the phosphopantetheine arm of the carrier protein MbtL. Shows a strong preference for palmitic acid (C16) and cannot use short-chain fatty acids. Proceeds via a Bi Uni Uni Bi ping-pong mechanism. During the first half-reaction (adenylation), fatty acid binds first to the free enzyme, followed by ATP and the release of pyrophosphate to form the adenylate intermediate. During the second half-reaction (ligation), holo-MbtL binds to the enzyme followed by the release of products AMP and acylated MbtL. This is Medium/long-chain-fatty-acid--[acyl-carrier-protein] ligase MbtM from Mycolicibacterium smegmatis (strain ATCC 700084 / mc(2)155) (Mycobacterium smegmatis).